A 440-amino-acid chain; its full sequence is Oligodendrocyte-myelin glycoprotein (440 aa).

The first 24 residues, 1–24 (MEYQILKMSLCLFILLFLTPGILC), serve as a signal peptide directing secretion. The LRRNT domain occupies 25-55 (ICPLQCICTERHRHVDCSGRNLSTLPSGLQE). 2 N-linked (GlcNAc...) asparagine glycosylation sites follow: asparagine 45 and asparagine 61. 8 LRR repeats span residues 56–77 (NIIH…LTQY), 79–100 (NLRT…LPRS), 101–121 (LWNM…DTAY), 124–145 (NLKY…KNTL), 147–168 (SLEV…MPSK), 169–189 (LHIV…TLIN), 192–213 (NLTH…SFDQ), and 216–239 (QLQE…TYLL). Residue asparagine 103 is glycosylated (N-linked (GlcNAc...) asparagine). N-linked (GlcNAc...) asparagine glycosylation is found at asparagine 152, asparagine 176, asparagine 189, asparagine 192, and asparagine 234. Ser/Thr-rich repeat units lie at residues 229 to 270 (CDHK…YPTP), 271 to 292 (SGFT…INSL), 293 to 335 (SVVT…VPYP), 336 to 377 (EDTS…SPTP), and 378 to 416 (MTLS…TPLP). Residues asparagine 364 and asparagine 389 are each glycosylated (N-linked (GlcNAc...) asparagine). The GPI-anchor amidated serine moiety is linked to residue serine 417. The propeptide at 418–440 (VANAWKVNASFLLLLNVVVMLAV) is removed in mature form. Residue asparagine 425 is glycosylated (N-linked (GlcNAc...) asparagine).

Binds to RTN4R. In terms of processing, O-glycosylated in its Ser/Thr-rich repeat domain. In terms of tissue distribution, oligodendrocytes and myelin of the central nervous system.

Its subcellular location is the cell membrane. Functionally, cell adhesion molecule contributing to the interactive process required for myelination in the central nervous system. This is Oligodendrocyte-myelin glycoprotein (OMG) from Homo sapiens (Human).